Reading from the N-terminus, the 600-residue chain is Glutamine--fructose-6-phosphate aminotransferase [isomerizing] (600 aa).

C2 serves as the catalytic Nucleophile; for GATase activity. One can recognise a Glutamine amidotransferase type-2 domain in the interval 2–217 (CGIVGYIGQL…DKEMVIVTDD (216 aa)). SIS domains lie at 283–422 (IAAA…KNGI) and 452–590 (IARE…VDKP). The active-site For Fru-6P isomerization activity is K595.

In terms of assembly, homodimer.

Its subcellular location is the cytoplasm. The enzyme catalyses D-fructose 6-phosphate + L-glutamine = D-glucosamine 6-phosphate + L-glutamate. Functionally, catalyzes the first step in hexosamine metabolism, converting fructose-6P into glucosamine-6P using glutamine as a nitrogen source. This Bacillus spizizenii (strain ATCC 23059 / NRRL B-14472 / W23) (Bacillus subtilis subsp. spizizenii) protein is Glutamine--fructose-6-phosphate aminotransferase [isomerizing] (glmS).